The chain runs to 101 residues: MMLEHVLVLSAYLFSVGLYGLITSRNMVRALMCLELILNAVNINFVTFSDFFDSRQLKGAIFSIFVIAIAAAEAAIGLAIVSSIYRNRKSIRINQSNLLNK.

A run of 3 helical transmembrane segments spans residues 2-22, 32-52, and 61-81; these read MLEHVLVLSAYLFSVGLYGLI, MCLELILNAVNINFVTFSDFF, and IFSIFVIAIAAAEAAIGLAIV.

The protein belongs to the complex I subunit 4L family. In terms of assembly, NDH is composed of at least 16 different subunits, 5 of which are encoded in the nucleus.

Its subcellular location is the plastid. The protein resides in the chloroplast thylakoid membrane. The catalysed reaction is a plastoquinone + NADH + (n+1) H(+)(in) = a plastoquinol + NAD(+) + n H(+)(out). It catalyses the reaction a plastoquinone + NADPH + (n+1) H(+)(in) = a plastoquinol + NADP(+) + n H(+)(out). Its function is as follows. NDH shuttles electrons from NAD(P)H:plastoquinone, via FMN and iron-sulfur (Fe-S) centers, to quinones in the photosynthetic chain and possibly in a chloroplast respiratory chain. The immediate electron acceptor for the enzyme in this species is believed to be plastoquinone. Couples the redox reaction to proton translocation, and thus conserves the redox energy in a proton gradient. In Panax ginseng (Korean ginseng), this protein is NAD(P)H-quinone oxidoreductase subunit 4L, chloroplastic.